The primary structure comprises 378 residues: Leukosialin (378 aa).

An N-terminal signal peptide occupies residues 1 to 7; the sequence is WAQVVSQ. The Extracellular segment spans residues 8 to 231; the sequence is ENLPNTMTML…TVPPRPGSSG (224 aa). O-linked (GalNAc...) threonine glycosylation is found at Thr-13, Thr-15, and Thr-20. Residues 13 to 33 form a disordered region; that stretch reads TMTMLPFTPNSESPSTSEALS. Residues Ser-23, Ser-25, and Ser-27 are each glycosylated (O-linked (GalNAc...) serine). Residue Thr-28 is glycosylated (O-linked (GalNAc...) threonine). O-linked (GalNAc...) serine glycans are attached at residues Ser-29 and Ser-33. O-linked (GalNAc...) threonine glycosylation is present at Thr-34. O-linked (GalNAc...) serine glycans are attached at residues Ser-36 and Ser-37. Thr-40 carries an O-linked (GalNAc...) threonine glycan. Residues Ser-108 and Ser-113 are each glycosylated (O-linked (GalNAc...) serine). 3 O-linked (GalNAc...) threonine glycosylation sites follow: Thr-118, Thr-120, and Thr-124. 2 O-linked (GalNAc...) serine glycosylation sites follow: Ser-125 and Ser-126. Residue Thr-174 is glycosylated (O-linked (GalNAc...) threonine). O-linked (GalNAc...) serine glycans are attached at residues Ser-176 and Ser-180. Thr-183 is a glycosylation site (O-linked (GalNAc...) threonine). Ser-187 is a glycosylation site (O-linked (GalNAc...) serine). A glycan (O-linked (GalNAc...) threonine) is linked at Thr-189. A helical transmembrane segment spans residues 232 to 254; the sequence is MLLVSMLIALTVVLVLVALLLLW. The tract at residues 255-285 is required for interaction with EZR, MSN and RDX and for co-localization to microvilli; sequence RQRQKRRTGALTLSRGGKRNGTVDAWAGPAR. Residues 255 to 378 are Cytoplasmic-facing; that stretch reads RQRQKRRTGA…AKDGAAPQSL (124 aa). Positions 259–273 match the Nuclear localization signal motif; it reads KRRTGALTLSRGGKR. The disordered stretch occupies residues 265 to 378; it reads LTLSRGGKRN…AKDGAAPQSL (114 aa). Position 268 is a phosphoserine (Ser-268). Thr-276 carries the phosphothreonine modification. Over residues 310 to 321 the composition is skewed to polar residues; it reads GSGQRPTLTTFF. Ser-311 carries the phosphoserine modification. Thr-316 carries the phosphothreonine modification. 2 positions are modified to phosphoserine: Ser-322 and Ser-326. Ser-330 carries the post-translational modification Phosphoserine; by PKC/PRKCQ. Ser-354 is subject to Phosphoserine. Residue Thr-361 is modified to Phosphothreonine.

As to quaternary structure, interacts with SIGLEC1. In terms of assembly, monomer. Interacts with CTNNB1. Interacts with EZR, MSN and RDX (via FERM domain). In terms of processing, has a high content of sialic acid and O-linked carbohydrate structures. Post-translationally, phosphorylation at Ser-330 is regulated by chemokines, requires its association with ERM proteins (EZR, RDX and MSN) and is essential for its function in the regulation of T-cell trafficking to lymph nodes. Cleavage by CTSG releases its extracellular domain and triggers its intramembrane proteolysis by gamma-secretase releasing the CD43 cytoplasmic tail chain (CD43-ct) which translocates to the nucleus. In terms of processing, sumoylated. In terms of tissue distribution, cell surface of thymocytes, T-lymphocytes, neutrophils, plasma cells and myelomas.

It is found in the membrane. It localises to the cell projection. The protein resides in the microvillus. Its subcellular location is the uropodium. The protein localises to the nucleus. It is found in the PML body. Functionally, predominant cell surface sialoprotein of leukocytes which regulates multiple T-cell functions, including T-cell activation, proliferation, differentiation, trafficking and migration. Positively regulates T-cell trafficking to lymph-nodes via its association with ERM proteins (EZR, RDX and MSN). Negatively regulates Th2 cell differentiation and predisposes the differentiation of T-cells towards a Th1 lineage commitment. Promotes the expression of IFN-gamma by T-cells during T-cell receptor (TCR) activation of naive cells and induces the expression of IFN-gamma by CD4(+) T-cells and to a lesser extent by CD8(+) T-cells. Plays a role in preparing T-cells for cytokine sensing and differentiation into effector cells by inducing the expression of cytokine receptors IFNGR and IL4R, promoting IFNGR and IL4R signaling and by mediating the clustering of IFNGR with TCR. Acts as a major E-selectin ligand responsible for Th17 cell rolling on activated vasculature and recruitment during inflammation. Mediates Th17 cells, but not Th1 cells, adhesion to E-selectin. Acts as a T-cell counter-receptor for SIGLEC1. Its function is as follows. Protects cells from apoptotic signals, promoting cell survival. In Rattus norvegicus (Rat), this protein is Leukosialin (Spn).